The chain runs to 186 residues: Pyridoxal 5'-phosphate synthase subunit PdxT (186 aa).

46 to 48 (GES) serves as a coordination point for L-glutamine. Catalysis depends on Cys-75, which acts as the Nucleophile. Residues Arg-101 and 129-130 (IR) contribute to the L-glutamine site. Catalysis depends on charge relay system residues His-165 and Glu-167.

The protein belongs to the glutaminase PdxT/SNO family. In the presence of PdxS, forms a dodecamer of heterodimers. Only shows activity in the heterodimer.

It catalyses the reaction aldehydo-D-ribose 5-phosphate + D-glyceraldehyde 3-phosphate + L-glutamine = pyridoxal 5'-phosphate + L-glutamate + phosphate + 3 H2O + H(+). The catalysed reaction is L-glutamine + H2O = L-glutamate + NH4(+). Its pathway is cofactor biosynthesis; pyridoxal 5'-phosphate biosynthesis. In terms of biological role, catalyzes the hydrolysis of glutamine to glutamate and ammonia as part of the biosynthesis of pyridoxal 5'-phosphate. The resulting ammonia molecule is channeled to the active site of PdxS. In Staphylococcus aureus (strain Mu3 / ATCC 700698), this protein is Pyridoxal 5'-phosphate synthase subunit PdxT.